Reading from the N-terminus, the 473-residue chain is Glucose facilitated diffusion protein (473 aa).

At 1 to 13 (MSSESSQGLVTRL) the chain is on the cytoplasmic side. Residues 14–34 (ALIAAIGGLLFGYDSAVIAAI) form a helical membrane-spanning segment. Topologically, residues 35 to 59 (GTPVDIHFIAPRHLSATAAASLSGM) are periplasmic. Residues 60–80 (VVVAVLVGCVTGSLLSGWIGI) traverse the membrane as a helical segment. Residues 81-85 (RFGRR) are Cytoplasmic-facing. A helical transmembrane segment spans residues 86–106 (GGLLMSSICFVAAGFGAALTE). The Periplasmic segment spans residues 107 to 112 (KLFGTG). Residues 113–133 (GSALQIFCFFRFLAGLGIGVV) traverse the membrane as a helical segment. Over 134-158 (STLTPTYIAEIAPPDKRGQMVSGQQ) the chain is Cytoplasmic. A helical transmembrane segment spans residues 159 to 179 (MAIVTGALTGYIFTWLLAHFG). The Periplasmic segment spans residues 180 to 187 (SIDWVNAS). A helical membrane pass occupies residues 188-208 (GWCWSPASEGLIGIAFLLLLL). At 209 to 257 (TAPDTPHWLVMKGRHSEASKILARLEPQADPNLTIQKIKAGFDKAMDKS) the chain is on the cytoplasmic side. A helical transmembrane segment spans residues 258–278 (SAGLFAFGITVVFAGVSVAAF). Over 279–303 (QQLVGINAVLYYAPQMFQNLGFGAD) the chain is Periplasmic. Residues 304–324 (TALLQTISIGVVNFIFTMIAS) form a helical membrane-spanning segment. At 325 to 335 (RVVDRFGRKPL) the chain is on the cytoplasmic side. The chain crosses the membrane as a helical span at residues 336–356 (LIWGALGMAAMMAVLGCCFWF). Residues 357–366 (KVGGVLPLAS) are Periplasmic-facing. Residues 367–387 (VLLYIAVFGMSWGPVCWVVLS) form a helical membrane-spanning segment. Topologically, residues 388–396 (EMFPSSIKG) are cytoplasmic. A helical membrane pass occupies residues 397-417 (AAMPIAVTGQWLANILVNFLF). Residues 418–429 (KVADGSPALNQT) are Periplasmic-facing. Residues 430-450 (FNHGFSYLVFAALSILGGLIV) form a helical membrane-spanning segment. Residues 451–473 (ARFVPETKGRSLDEIEEMWRSQK) lie on the Cytoplasmic side of the membrane.

Belongs to the major facilitator superfamily. Sugar transporter (TC 2.A.1.1) family.

Its subcellular location is the cell inner membrane. Allows uptake of glucose by the cell; allows growth on glucose minimal medium by E.coli cells impaired in glucose transport. Also transports fructose, but has a strong preference for glucose. This is Glucose facilitated diffusion protein from Zymomonas mobilis subsp. mobilis (strain ATCC 31821 / ZM4 / CP4).